Here is a 170-residue protein sequence, read N- to C-terminus: MMAGMKIQLVCMLLLAFSSWSLCSDSEEEMKALEADFLTNMHTSKISKAHVPSWKMTLLNVCSLVNNLNSPAEETGEVHEEELVARRKLPTALDGFSLEAMLTIYQLHKICHSRAFQHWELIQEDILDTGNDKNGKEEVIKRKIPYILKRQLYENKPRRPYILKRDSYYY.

The first 23 residues, 1-23 (MMAGMKIQLVCMLLLAFSSWSLC), serve as a signal peptide directing secretion. Gln-151 is modified (pyrrolidone carboxylic acid).

The protein belongs to the neurotensin family. As to quaternary structure, interacts with NTSR1. Interacts with SORT1. Interacts with SORL1. In terms of processing, neurotensin is cleaved and degraded by Angiotensin-converting enzyme (ACE) and neprilysin (MME).

It is found in the secreted. The protein localises to the cytoplasmic vesicle. The protein resides in the secretory vesicle. Its function is as follows. Neurotensin may play an endocrine or paracrine role in the regulation of fat metabolism. It causes contraction of smooth muscle. The polypeptide is Neurotensin/neuromedin N (NTS) (Homo sapiens (Human)).